The primary structure comprises 215 residues: Ras-related protein Rab-14 (215 aa).

A2 is modified (N-acetylalanine). The GTP site is built by G21, V22, G23, K24, S25, C26, A38, D39, C40, H42, and T43. Mg(2+) is bound at residue S25. The Switch 1 signature appears at H42–E47. The Mg(2+) site is built by T43 and D66. Residues A68–T77 carry the Switch 2 motif. Residues G69, N124, K125, D127, A155, and K156 each coordinate GTP. Residues S188 to C215 are disordered. S-geranylgeranyl cysteine attachment occurs at residues C213 and C215. At C215 the chain carries Cysteine methyl ester.

The protein belongs to the small GTPase superfamily. Rab family. Mg(2+) serves as cofactor.

It localises to the recycling endosome. Its subcellular location is the early endosome membrane. The protein resides in the golgi apparatus membrane. It is found in the golgi apparatus. The protein localises to the trans-Golgi network membrane. It localises to the cytoplasmic vesicle. Its subcellular location is the phagosome. The enzyme catalyses GTP + H2O = GDP + phosphate + H(+). Its activity is regulated as follows. Regulated by guanine nucleotide exchange factors (GEFs) including DENND6A and DENND6B which promote the exchange of bound GDP for free GTP. Regulated by GTPase activating proteins (GAPs) which increase the GTP hydrolysis activity. Inhibited by GDP dissociation inhibitors (GDIs) which prevent Rab-GDP dissociation. The small GTPases Rab are key regulators of intracellular membrane trafficking, from the formation of transport vesicles to their fusion with membranes. Rabs cycle between an inactive GDP-bound form and an active GTP-bound form that is able to recruit to membranes different set of downstream effectors directly responsible for vesicle formation, movement, tethering and fusion. Involved in membrane trafficking between the Golgi complex and endosomes during early embryonic development. Regulates the Golgi to endosome transport of FGFR-containing vesicles during early development, a key process for developing basement membrane and epiblast and primitive endoderm lineages during early postimplantation development. May act by modulating the kinesin KIF16B-cargo association to endosomes. Regulates, together with its guanine nucleotide exchange factor DENND6A, the specific endocytic transport of ADAM10, N-cadherin/CDH2 shedding and cell-cell adhesion. Mediates endosomal tethering and fusion through the interaction with RUFY1 and RAB4B. Interaction with RAB11FIP1 may function in the process of neurite formation. This is Ras-related protein Rab-14 (RAB14) from Gallus gallus (Chicken).